We begin with the raw amino-acid sequence, 232 residues long: Large ribosomal subunit protein uL1 (232 aa).

It belongs to the universal ribosomal protein uL1 family. In terms of assembly, part of the 50S ribosomal subunit.

Its function is as follows. Binds directly to 23S rRNA. The L1 stalk is quite mobile in the ribosome, and is involved in E site tRNA release. Protein L1 is also a translational repressor protein, it controls the translation of the L11 operon by binding to its mRNA. This chain is Large ribosomal subunit protein uL1, found in Pelotomaculum thermopropionicum (strain DSM 13744 / JCM 10971 / SI).